Reading from the N-terminus, the 82-residue chain is Progonadoliberin-3 (82 aa).

The signal sequence occupies residues Met1 to Ser23. A Pyrrolidone carboxylic acid modification is found at Gln24. Gly33 is modified (glycine amide).

Belongs to the GnRH family. As to expression, brain.

It localises to the secreted. Functionally, stimulates the secretion of gonadotropins. The protein is Progonadoliberin-3 (gnrh3) of Oncorhynchus nerka (Sockeye salmon).